Consider the following 327-residue polypeptide: MTKEVLIHQIIDVLARAGFALSDRCNIRPRSFDVAARKDETLLLCKVLFNIDGLNEETAREMKYLAEYLGGSAIVVGAKTRDQMLEDSVVYMRYDILALNVQTLYDYFIENVPPLVSAAPGGLYVSIEGDILKKARMGQSMSLGTLASMVGVSRRTISKYEEEGMDASIDVVLQLEDIFGVELAKPINILKSCGSRKPRKKAESRTETQEKPYTLLPEDLILNTISMLGYDVLPTTQAPFKAISRDKSSVILTGVSEFNTTVVKRAHLMSSISCVTETQSVFIINGHSKIKSVENTVMIEKKELDKISDSQELLNFIEERRETHDEK.

One can recognise an HTH cro/C1-type domain in the interval 132 to 190; that stretch reads LKKARMGQSMSLGTLASMVGVSRRTISKYEEEGMDASIDVVLQLEDIFGVELAKPINIL. The segment at residues 143 to 162 is a DNA-binding region (H-T-H motif); it reads LGTLASMVGVSRRTISKYEE.

This is Putative HTH-type transcriptional regulatory protein Mbar_A2318 from Methanosarcina barkeri (strain Fusaro / DSM 804).